Reading from the N-terminus, the 809-residue chain is Interleukin-4 receptor subunit alpha (809 aa).

An N-terminal signal peptide occupies residues 1-25 (MGCLCPGLTLPVSCLILVWAAGSGS). Topologically, residues 26 to 231 (VKVLRLTACF…NYYEQPLEQR (206 aa)) are extracellular. The cysteines at positions 34 and 44 are disulfide-linked. 2 N-linked (GlcNAc...) asparagine glycosylation sites follow: Asn53 and Asn71. Cys74 and Cys86 are oxidised to a cystine. Asn112, Asn128, and Asn161 each carry an N-linked (GlcNAc...) asparagine glycan. The region spanning 125 to 222 (APQNLTVHAI…EWSPSTTWHN (98 aa)) is the Fibronectin type-III domain. At Ser163 the chain carries Phosphoserine. Residues Asn175 and Asn208 are each glycosylated (N-linked (GlcNAc...) asparagine). Positions 211 to 215 (WSEWS) match the WSXWS motif motif. The helical transmembrane segment at 232 to 255 (LPLGVSISCVVILAICLSCYFSII) threads the bilayer. The Cytoplasmic portion of the chain corresponds to 256-809 (KIKKEWWDQI…STGPTCTSAS (554 aa)). A Box 1 motif motif is present at residues 261–269 (WWDQIPNPA). 2 disordered regions span residues 369–397 (ESEEEEVEEDRGSFCPSPESSGSGFQEGR) and 441–468 (SAGPQEAASQGEEQPLNPESNPLATLTQ). Over residues 447–468 (AASQGEEQPLNPESNPLATLTQ) the composition is skewed to polar residues. Residue Tyr488 is modified to Phosphotyrosine. The interval 514-536 (LGQVDPSIPSAPQPSEPPTALQP) is disordered. 3 positions are modified to phosphotyrosine: Tyr566, Tyr590, and Tyr618. The segment at 606 to 674 (QSGVEASSGE…EPTVKGEDPR (69 aa)) is disordered. The ITIM motif motif lies at 695-700 (IVYSAL).

Belongs to the type I cytokine receptor family. Type 4 subfamily. As to quaternary structure, the functional IL4 receptor is formed by initial binding of IL4 to IL4R. Subsequent recruitment to the complex of the common gamma chain, in immune cells, creates a type I receptor and, in non-immune cells, of IL13RA1 forms a type II receptor. IL4R can also interact with the IL13/IL13RA1 complex to form a similar type II receptor. Interacts with PIK3C3. Interacts with the SH2-containing phosphatases, PTPN6/SHIP1, PTPN11/SHIP2 and INPP5D/SHIP. Interacts with JAK1 through a Box 1-containing region; inhibited by SOCS5. Interacts with SOCS5; inhibits IL4 signaling. Interacts with JAK3. Interacts with CLM1. Interacts with IL13RA2. On IL4 binding, phosphorylated on tyrosine residues in the cytoplasmic domain.

Its subcellular location is the cell membrane. It is found in the secreted. Functionally, receptor for both interleukin 4 and interleukin 13. Couples to the JAK1/2/3-STAT6 pathway. The IL4 response is involved in promoting Th2 differentiation. The IL4/IL13 responses are involved in regulating IgE production and, chemokine and mucus production at sites of allergic inflammation. In certain cell types, can signal through activation of insulin receptor substrates, IRS1/IRS2. The protein is Interleukin-4 receptor subunit alpha (IL4R) of Equus caballus (Horse).